The following is a 403-amino-acid chain: Acetate kinase (403 aa).

A Mg(2+)-binding site is contributed by N9. K16 lines the ATP pocket. Residue R93 participates in substrate binding. D150 (proton donor/acceptor) is an active-site residue. Residues H210–G214, D284–R286, and G332–N336 each bind ATP. Residue E388 coordinates Mg(2+).

This sequence belongs to the acetokinase family. In terms of assembly, homodimer. It depends on Mg(2+) as a cofactor. Mn(2+) is required as a cofactor.

It localises to the cytoplasm. The enzyme catalyses acetate + ATP = acetyl phosphate + ADP. It participates in metabolic intermediate biosynthesis; acetyl-CoA biosynthesis; acetyl-CoA from acetate: step 1/2. Catalyzes the formation of acetyl phosphate from acetate and ATP. Can also catalyze the reverse reaction. The sequence is that of Acetate kinase from Corynebacterium jeikeium (strain K411).